Consider the following 233-residue polypeptide: Orotidine 5'-phosphate decarboxylase (233 aa).

Residues aspartate 11, lysine 34, 61–70 (DLKLHDIPNT), threonine 117, arginine 179, glutamine 188, glycine 208, and arginine 209 contribute to the substrate site. The Proton donor role is filled by lysine 63.

Belongs to the OMP decarboxylase family. Type 1 subfamily. Homodimer.

It catalyses the reaction orotidine 5'-phosphate + H(+) = UMP + CO2. Its pathway is pyrimidine metabolism; UMP biosynthesis via de novo pathway; UMP from orotate: step 2/2. Catalyzes the decarboxylation of orotidine 5'-monophosphate (OMP) to uridine 5'-monophosphate (UMP). This chain is Orotidine 5'-phosphate decarboxylase, found in Streptococcus pneumoniae (strain Hungary19A-6).